The chain runs to 736 residues: RNA-binding protein RMD9-like, mitochondrial (736 aa).

3 disordered regions span residues 1–28 (MFRF…KTNS), 124–148 (PRRS…HPNT), and 566–618 (NRGI…GTPV). The transit peptide at 1 to 79 (MFRFAQPANV…HFKNQFSSRN (79 aa)) directs the protein to the mitochondrion. Over residues 125–140 (RRSNMRNNGNNNMNNG) the composition is skewed to low complexity. The span at 566-578 (NRGISSSSPMSAV) shows a compositional bias: polar residues. Residues 579–596 (NSLAPSTTNTPSPSLSPI) are compositionally biased toward low complexity. Polar residues predominate over residues 602–613 (LSSARNTPNKIW).

This sequence belongs to the RMD9 family. In terms of assembly, monomer. Post-translationally, phosphorylated. Phosphorylation promotes binding to RNA.

The protein localises to the mitochondrion inner membrane. Functionally, may be involved in the processing or stability of mitochondrial mRNAs. This chain is RNA-binding protein RMD9-like, mitochondrial, found in Candida glabrata (strain ATCC 2001 / BCRC 20586 / JCM 3761 / NBRC 0622 / NRRL Y-65 / CBS 138) (Yeast).